The following is a 131-amino-acid chain: Fumarate reductase subunit C (131 aa).

A run of 3 helical transmembrane segments spans residues 30 to 50, 63 to 83, and 109 to 129; these read EGTA…LFAL, FLQN…ALLH, and IIKS…FVAL.

This sequence belongs to the FrdC family. In terms of assembly, part of an enzyme complex containing four subunits: a flavoprotein (FrdA), an iron-sulfur protein (FrdB), and two hydrophobic anchor proteins (FrdC and FrdD).

Its subcellular location is the cell inner membrane. Functionally, two distinct, membrane-bound, FAD-containing enzymes are responsible for the catalysis of fumarate and succinate interconversion; fumarate reductase is used in anaerobic growth, and succinate dehydrogenase is used in aerobic growth. Anchors the catalytic components of the fumarate reductase complex to the cell inner membrane, binds quinones. This Shigella dysenteriae serotype 1 (strain Sd197) protein is Fumarate reductase subunit C.